A 662-amino-acid chain; its full sequence is A-kinase anchor protein 10, mitochondrial (662 aa).

A mitochondrion-targeting transit peptide spans 1–28 (MRGAGPSPRQSPRTLRPDPGPAMSFFRR). The tract at residues 1–55 (MRGAGPSPRQSPRTLRPDPGPAMSFFRRKVKGKEQEKTSDVKSIKASISVHSPQK) is disordered. The span at 32 to 43 (GKEQEKTSDVKS) shows a compositional bias: basic and acidic residues. Phosphoserine occurs at positions 52 and 189. 2 RGS domains span residues 125 to 369 (TLEQ…CKYQ) and 379 to 505 (YLAD…YKYL). The span at 261-280 (SMETQESSSTLTVASRNSPA) shows a compositional bias: polar residues. Positions 261-282 (SMETQESSSTLTVASRNSPASP) are disordered. Residue Ser281 is modified to Phosphoserine. The tract at residues 524–548 (LTAPGSVGPPDESHPGSSDSSASQS) is disordered. The interval 634–647 (LAWKIAKMIVSDIM) is PKA-RII subunit binding.

It is found in the mitochondrion. Its subcellular location is the membrane. The protein resides in the cytoplasm. Functionally, differentially targeted protein that binds to type I and II regulatory subunits of protein kinase A and anchors them to the mitochondria or the plasma membrane. Although the physiological relevance between PKA and AKAPS with mitochondria is not fully understood, one idea is that BAD, a proapoptotic member, is phosphorylated and inactivated by mitochondria-anchored PKA. It cannot be excluded too that it may facilitate PKA as well as G protein signal transduction, by acting as an adapter for assembling multiprotein complexes. With its RGS domain, it could lead to the interaction to G-alpha proteins, providing a link between the signaling machinery and the downstream kinase. The sequence is that of A-kinase anchor protein 10, mitochondrial (AKAP10) from Homo sapiens (Human).